The primary structure comprises 452 residues: GTPase Der (452 aa).

2 EngA-type G domains span residues 4 to 169 (PIVA…PPPE) and 177 to 352 (IKVA…EEHR). Residues 10 to 17 (GRPNVGKS), 57 to 61 (DTGGL), 120 to 123 (NKCE), 183 to 190 (GRPNVGKS), 230 to 234 (DTAGI), and 295 to 298 (NKWD) contribute to the GTP site. One can recognise a KH-like domain in the interval 353–438 (RRVTTAVINE…PIRLLWRGKK (86 aa)).

This sequence belongs to the TRAFAC class TrmE-Era-EngA-EngB-Septin-like GTPase superfamily. EngA (Der) GTPase family. As to quaternary structure, associates with the 50S ribosomal subunit.

Functionally, GTPase that plays an essential role in the late steps of ribosome biogenesis. The polypeptide is GTPase Der (Rippkaea orientalis (strain PCC 8801 / RF-1) (Cyanothece sp. (strain PCC 8801))).